We begin with the raw amino-acid sequence, 121 residues long: Alpha-endosulfine (121 aa).

Residues 1 to 53 (MSQKQEEENPAEETGEEKQDTQEKEGILPEKAEEAKLKAKYPSLGQKPGGSDF) form a disordered region. The residue at position 2 (Ser-2) is an N-acetylserine. Ser-2 is subject to Phosphoserine. Residues 16 to 37 (EEKQDTQEKEGILPEKAEEAKL) are compositionally biased toward basic and acidic residues. Thr-21 is modified (phosphothreonine). Ser-43 is subject to Phosphoserine. Phosphoserine; by GWL is present on Ser-67. The disordered stretch occupies residues 79–121 (NKQLPSAGPDKNLVTGDHIPTPQDLPQRKSSLVTSKLAGGQVE). The residue at position 109 (Ser-109) is a Phosphoserine; by PKA.

This sequence belongs to the endosulfine family. As to quaternary structure, interacts (when phosphorylated at Ser-67) with PPP2R2D. Interacts with ABCC8. Interacts with SNCA; interaction is disrupted when phosphorylated at Ser-109. Phosphorylation at Ser-67 by GWL during mitosis is essential for interaction with PPP2R2D (PR55-delta) and subsequent inactivation of PP2A. Phosphorylated by PKA.

The protein localises to the cytoplasm. Protein phosphatase inhibitor that specifically inhibits protein phosphatase 2A (PP2A) during mitosis. When phosphorylated at Ser-67 during mitosis, specifically interacts with PPP2R2D (PR55-delta) and inhibits its activity, leading to inactivation of PP2A, an essential condition to keep cyclin-B1-CDK1 activity high during M phase. Also acts as a stimulator of insulin secretion by interacting with sulfonylurea receptor (ABCC8), thereby preventing sulfonylurea from binding to its receptor and reducing K(ATP) channel currents. The polypeptide is Alpha-endosulfine (ENSA) (Bos taurus (Bovine)).